The sequence spans 126 residues: MMTDPISDMLTRIRNAQLALHKDVAIPYSKIKYSIANILKEEGYINELTLNNGTITLYFKYYKGKAAIEGLRRISKSGRRVYVSTHDIPSVQNGLGICILSTSIGVIGCNKARCSKVGGELLCEVW.

It belongs to the universal ribosomal protein uS8 family. Part of the 30S ribosomal subunit. Contacts proteins S5 and S12.

Its function is as follows. One of the primary rRNA binding proteins, it binds directly to 16S rRNA central domain where it helps coordinate assembly of the platform of the 30S subunit. The polypeptide is Small ribosomal subunit protein uS8 (Lawsonia intracellularis (strain PHE/MN1-00)).